The primary structure comprises 249 residues: RNA polymerase sigma factor SigI3 (249 aa).

The short motif at 60 to 73 (EEFSIGLAAFNEAI) is the Polymerase core binding element. The segment at residues 199-218 (MKEVLSRIKVNHKTIQRNRK) is a DNA-binding region (H-T-H motif).

It belongs to the sigma-70 factor family. SigI subfamily. As to quaternary structure, interacts with RsgI3.

The protein localises to the cytoplasm. Negatively regulated by the anti-sigma-I factor RsgI3. Binding of the polysaccharide substrate to RsgI3 may lead to the release and activation of SigI3. In terms of biological role, sigma factors are initiation factors that promote the attachment of RNA polymerase to specific initiation sites and are then released. This sigma factor is involved in regulation of cellulosomal genes via an external polysaccharide-sensing mechanism. Recognizes the predicted promoters associated with sigI3 itself, pl11, ce12 and cipA. In Acetivibrio thermocellus (strain ATCC 27405 / DSM 1237 / JCM 9322 / NBRC 103400 / NCIMB 10682 / NRRL B-4536 / VPI 7372) (Clostridium thermocellum), this protein is RNA polymerase sigma factor SigI3.